The sequence spans 452 residues: Bifunctional purine biosynthesis protein PurH (452 aa).

Positions 1–115 (MKRILVSLYE…KNWKKVKPAF (115 aa)) constitute an MGS-like domain.

The protein belongs to the PurH family.

It carries out the reaction (6R)-10-formyltetrahydrofolate + 5-amino-1-(5-phospho-beta-D-ribosyl)imidazole-4-carboxamide = 5-formamido-1-(5-phospho-D-ribosyl)imidazole-4-carboxamide + (6S)-5,6,7,8-tetrahydrofolate. The catalysed reaction is IMP + H2O = 5-formamido-1-(5-phospho-D-ribosyl)imidazole-4-carboxamide. It participates in purine metabolism; IMP biosynthesis via de novo pathway; 5-formamido-1-(5-phospho-D-ribosyl)imidazole-4-carboxamide from 5-amino-1-(5-phospho-D-ribosyl)imidazole-4-carboxamide (10-formyl THF route): step 1/1. Its pathway is purine metabolism; IMP biosynthesis via de novo pathway; IMP from 5-formamido-1-(5-phospho-D-ribosyl)imidazole-4-carboxamide: step 1/1. This chain is Bifunctional purine biosynthesis protein PurH, found in Thermotoga maritima (strain ATCC 43589 / DSM 3109 / JCM 10099 / NBRC 100826 / MSB8).